We begin with the raw amino-acid sequence, 267 residues long: X-box-binding protein 1 (267 aa).

Over 1–180 (MVVVAAAPSA…VQAQLSPPQN (180 aa)) the chain is Cytoplasmic. Residues 35–60 (VPGPRAAGSEASGTPQARKRQRLTHL) are disordered. Position 61 is a phosphoserine (Ser-61). One can recognise a bZIP domain in the interval 63–126 (EEKALRRKLK…HGLVIENQEL (64 aa)). Residues 65–87 (KALRRKLKNRVAAQTARDRKKAR) are basic motif. Positions 69 to 85 (RKLKNRVAAQTARDRKK) are nuclear localization signal (NLS). Positions 91–126 (LEQQVVDLEEENQKLQLENQLLREKTHGLVIENQEL) are leucine-zipper. Residues 181 to 198 (IFPWILTLLPLQILSLIS) form a helical; Signal-anchor for type II membrane protein membrane-spanning segment. Topologically, residues 199–267 (FWAFWTSWTL…FVLTMYTPSL (69 aa)) are lumenal.

This sequence belongs to the bZIP family. In terms of assembly, isoform 1 interacts with HM13. Isoform 1 interacts with RNF139; the interaction induces ubiquitination and degradation of isoform 1. Isoform 1 interacts (via luminal domain) with DERL1; the interaction obviates the need for ectodomain shedding prior HM13/SPP-mediated XBP1 isoform 1 cleavage. Isoform 1 interacts with HDAC3 and AKT1; the interactions occur in endothelial cell (EC) under disturbed flow. Isoform 1 interacts with the oncoprotein FOS. Interacts with SIRT1. Isoform 1 is ubiquitinated, leading to proteasome-mediated degradation in response to ER stress. Post-translationally, X-box-binding protein 1, cytoplasmic form and luminal form are produced by intramembrane proteolytic cleavage of ER membrane-anchored isoform 1 triggered by HM13/SPP in a DERL1-RNF139-dependent and VCP/p97-independent manner. X-box-binding protein 1, luminal form is ubiquitinated leading to proteasomal degradation. In terms of processing, acetylated by EP300; acetylation positively regulates the transcriptional activity of XBP1. Deacetylated by SIRT1; deacetylation negatively regulates the transcriptional activity of XBP1.

Its subcellular location is the nucleus. It is found in the endoplasmic reticulum. It localises to the cytoplasm. The protein resides in the endoplasmic reticulum membrane. The protein localises to the membrane. Its function is as follows. Functions as a transcription factor during endoplasmic reticulum (ER) stress by regulating the unfolded protein response (UPR). Required for cardiac myogenesis and hepatogenesis during embryonic development, and the development of secretory tissues such as exocrine pancreas and salivary gland. Involved in terminal differentiation of B lymphocytes to plasma cells and production of immunoglobulins. Modulates the cellular response to ER stress in a PIK3R-dependent manner. Binds to the cis-acting X box present in the promoter regions of major histocompatibility complex class II genes. Involved in VEGF-induced endothelial cell (EC) proliferation and retinal blood vessel formation during embryonic development but also for angiogenesis in adult tissues under ischemic conditions. Functions also as a major regulator of the UPR in obesity-induced insulin resistance and type 2 diabetes for the management of obesity and diabetes prevention. Functionally, acts as a weak transcriptional factor. Together with HDAC3, contributes to the activation of NFE2L2-mediated HMOX1 transcription factor gene expression in a PI(3)K/mTORC2/Akt-dependent signaling pathway leading to EC survival under disturbed flow/oxidative stress. Binds to the ER stress response element (ERSE) upon ER stress. Binds to the consensus 5'-GATGACGTG[TG]N(3)[AT]T-3' sequence related to cAMP responsive element (CRE)-like sequences. Associates preferentially to the HDAC3 gene promoter region in a static flow-dependent manner. Binds to the CDH5/VE-cadherin gene promoter region. The chain is X-box-binding protein 1 from Rattus norvegicus (Rat).